The sequence spans 453 residues: Phenolic glucoside malonyltransferase 1 (453 aa).

Catalysis depends on His165, which acts as the Proton acceptor. An HXXXD motif motif is present at residues 165–169 (HVAGD). Malonyl-CoA contacts are provided by residues Lys254, His266, and 268-269 (TS). Catalysis depends on Asp394, which acts as the Proton acceptor. The DFGWG motif signature appears at 394 to 398 (DFGWG).

This sequence belongs to the plant acyltransferase family. Phenolic glucoside malonyltransferase subfamily. As to quaternary structure, monomer. In terms of tissue distribution, highly expressed in flower. Also expressed in flower bud, stem, root and leaf.

The catalysed reaction is a flavonol 3-O-beta-D-glucoside + malonyl-CoA = a flavonol 3-O-(6-O-malonyl-beta-D-glucoside) + CoA. It carries out the reaction a flavonol 7-O-beta-D-glucoside + malonyl-CoA = a flavonol 7-O-(6-O-malonyl-beta-D-glucoside) + CoA. Its function is as follows. Malonyltransferase with broad substrate specificity acting on phenolic glucosides including xenobiotic naphthols. Has activity against flavonoid 7-O-glucosides, flavonoid 3-O-glucosides and naphthol glucosides, and to a lesser extent against coumarin glucosides in vitro. Prefers malonyl-CoA as an acyl donor, but also active with succinyl-CoA and methylmalonyl-CoA, but not with acetyl-CoA. The chain is Phenolic glucoside malonyltransferase 1 from Nicotiana tabacum (Common tobacco).